A 252-amino-acid polypeptide reads, in one-letter code: MKTVTVRDLVVGEGAPKIIVSLMGKTITDVKSEALAYREADFDILEWRVDHFANVTTAESVLEAAGAIREIITDKPLLFTFRSAKEGGEQALTTEQYIALNRAAVDSGLVDMIDLELFTGDDEVKATVGYAHQHNVAVIMSNHDFHKTPAAEEIVQRLRKMQELGADIPKIAVMPQTKADVLTLLTATVEMQERYADRPIITMSMSKTGVISRLAGEVFGSAATFGAVKKASAPGQISVADLRTVLTILHQA.

3-dehydroquinate-binding positions include S21, 46–48 (EWR), and R82. The active-site Proton donor/acceptor is the H143. K170 (schiff-base intermediate with substrate) is an active-site residue. 3 residues coordinate 3-dehydroquinate: R213, S232, and Q236.

The protein belongs to the type-I 3-dehydroquinase family. Homodimer.

The catalysed reaction is 3-dehydroquinate = 3-dehydroshikimate + H2O. Its pathway is metabolic intermediate biosynthesis; chorismate biosynthesis; chorismate from D-erythrose 4-phosphate and phosphoenolpyruvate: step 3/7. Involved in the third step of the chorismate pathway, which leads to the biosynthesis of aromatic amino acids. Catalyzes the cis-dehydration of 3-dehydroquinate (DHQ) and introduces the first double bond of the aromatic ring to yield 3-dehydroshikimate. The polypeptide is 3-dehydroquinate dehydratase (Salmonella agona (strain SL483)).